Consider the following 251-residue polypeptide: Triosephosphate isomerase (251 aa).

9–11 (NWK) serves as a coordination point for substrate. His95 acts as the Electrophile in catalysis. Glu167 (proton acceptor) is an active-site residue. Substrate-binding positions include Gly173, Ser212, and 233-234 (GG).

This sequence belongs to the triosephosphate isomerase family. As to quaternary structure, homodimer.

Its subcellular location is the cytoplasm. It carries out the reaction D-glyceraldehyde 3-phosphate = dihydroxyacetone phosphate. It functions in the pathway carbohydrate biosynthesis; gluconeogenesis. The protein operates within carbohydrate degradation; glycolysis; D-glyceraldehyde 3-phosphate from glycerone phosphate: step 1/1. Its function is as follows. Involved in the gluconeogenesis. Catalyzes stereospecifically the conversion of dihydroxyacetone phosphate (DHAP) to D-glyceraldehyde-3-phosphate (G3P). The protein is Triosephosphate isomerase of Pseudomonas paraeruginosa (strain DSM 24068 / PA7) (Pseudomonas aeruginosa (strain PA7)).